Reading from the N-terminus, the 496-residue chain is uncharacterized protein (496 aa).

7 residues coordinate Mg(2+): aspartate 36, aspartate 81, glutamate 300, glutamate 302, aspartate 321, aspartate 323, and aspartate 375.

This sequence belongs to the XPG/RAD2 endonuclease family. FEN1 subfamily. Mg(2+) serves as cofactor.

This is an uncharacterized protein from Schizosaccharomyces pombe (strain 972 / ATCC 24843) (Fission yeast).